The primary structure comprises 704 residues: Elongation factor G (704 aa).

In terms of domain architecture, tr-type G spans 8-291 (DKVRNIGIMA…AVIDYLASPV (284 aa)). Residues 17 to 24 (AHIDAGKT), 90 to 94 (DTPGH), and 144 to 147 (NKMD) contribute to the GTP site.

This sequence belongs to the TRAFAC class translation factor GTPase superfamily. Classic translation factor GTPase family. EF-G/EF-2 subfamily.

It is found in the cytoplasm. In terms of biological role, catalyzes the GTP-dependent ribosomal translocation step during translation elongation. During this step, the ribosome changes from the pre-translocational (PRE) to the post-translocational (POST) state as the newly formed A-site-bound peptidyl-tRNA and P-site-bound deacylated tRNA move to the P and E sites, respectively. Catalyzes the coordinated movement of the two tRNA molecules, the mRNA and conformational changes in the ribosome. The polypeptide is Elongation factor G (Chlorobaculum parvum (strain DSM 263 / NCIMB 8327) (Chlorobium vibrioforme subsp. thiosulfatophilum)).